The sequence spans 240 residues: Adenylate dimethylallyltransferase (240 aa).

It belongs to the isopentenyl transferase family.

It carries out the reaction dimethylallyl diphosphate + AMP = N(6)-(dimethylallyl)adenosine 5'-phosphate + diphosphate. Transfers dimethylallyl groups to AMP as part of the biosynthesis of cytokinin phytohormones. In Agrobacterium fabrum (strain C58 / ATCC 33970) (Agrobacterium tumefaciens (strain C58)), this protein is Adenylate dimethylallyltransferase (izt).